The chain runs to 213 residues: ER lumen protein-retaining receptor erd-2.2 (213 aa).

Residues 1–2 (MN) lie on the Lumenal side of the membrane. Residues 3-21 (IFRISADMSHLLAIIILLL) form a helical membrane-spanning segment. The Cytoplasmic portion of the chain corresponds to 22 to 35 (KIWKSRSCSGISAR). The helical transmembrane segment at 36-53 (SQILFALVFTARYLDLFS) threads the bilayer. Over 54 to 61 (TYISLYNT) the chain is Lumenal. The chain crosses the membrane as a helical span at residues 62–80 (TMKITFLAATYATVYLMFF). The Cytoplasmic segment spans residues 81 to 96 (KFRSTYMRESDTFRVE). The chain crosses the membrane as a helical span at residues 97-110 (LLIVPAAILALLIN). Over 111–117 (HDFAPFE) the chain is Lumenal. Residues 118 to 137 (LLWTFSIYLEAVAILPQLFL) traverse the membrane as a helical segment. Topologically, residues 138–149 (LQSTGSAEVITA) are cytoplasmic. A helical membrane pass occupies residues 150 to 168 (HYLFALGSYRALYIFNWIY). Topologically, residues 169–178 (RYYTEDYFDP) are lumenal. The helical transmembrane segment at 179 to 199 (IVVVAGIVQTVLYADFFYLYV) threads the bilayer. The Cytoplasmic portion of the chain corresponds to 200–213 (TRVVQTRKGMELPI).

It belongs to the ERD2 family.

It is found in the endoplasmic reticulum membrane. In terms of biological role, required for the retention of luminal endoplasmic reticulum proteins. Determines the specificity of the luminal ER protein retention system. Also required for normal vesicular traffic through the Golgi. The polypeptide is ER lumen protein-retaining receptor erd-2.2 (Caenorhabditis elegans).